The chain runs to 111 residues: Resistin-like beta (111 aa).

The signal sequence occupies residues 1-23; the sequence is MGPSSCLLLILIPLLQLINPGST. Intrachain disulfides connect Cys55-Cys108, Cys67-Cys107, Cys76-Cys93, Cys78-Cys95, and Cys82-Cys97.

It belongs to the resistin/FIZZ family. As to quaternary structure, homodimer; disulfide-linked. In terms of tissue distribution, expressed only in the gastrointestinal tract, particularly the colon.

The protein resides in the secreted. Its function is as follows. Probable hormone. This chain is Resistin-like beta (RETNLB), found in Homo sapiens (Human).